The sequence spans 84 residues: Acyl carrier protein (84 aa).

The region spanning 6-81 is the Carrier domain; the sequence is EEILTGLAEI…DAVDYIANAT (76 aa). An O-(pantetheine 4'-phosphoryl)serine modification is found at serine 41.

This sequence belongs to the acyl carrier protein (ACP) family. Post-translationally, 4'-phosphopantetheine is transferred from CoA to a specific serine of apo-ACP by AcpS. This modification is essential for activity because fatty acids are bound in thioester linkage to the sulfhydryl of the prosthetic group.

It is found in the cytoplasm. It functions in the pathway lipid metabolism; fatty acid biosynthesis. In terms of biological role, carrier of the growing fatty acid chain in fatty acid biosynthesis. This Acidothermus cellulolyticus (strain ATCC 43068 / DSM 8971 / 11B) protein is Acyl carrier protein.